A 123-amino-acid polypeptide reads, in one-letter code: UPF0299 membrane protein VV1471 (123 aa).

Transmembrane regions (helical) follow at residues 8–28 (LFGL…GSGI), 35–55 (SVPG…IGLV), 71–91 (MILL…MLIA), and 94–114 (LPII…LGWL).

Belongs to the UPF0299 family.

It localises to the cell inner membrane. The sequence is that of UPF0299 membrane protein VV1471 from Vibrio vulnificus (strain YJ016).